Consider the following 570-residue polypeptide: Proline--tRNA ligase (570 aa).

This sequence belongs to the class-II aminoacyl-tRNA synthetase family. ProS type 1 subfamily. As to quaternary structure, homodimer.

It is found in the cytoplasm. It carries out the reaction tRNA(Pro) + L-proline + ATP = L-prolyl-tRNA(Pro) + AMP + diphosphate. Catalyzes the attachment of proline to tRNA(Pro) in a two-step reaction: proline is first activated by ATP to form Pro-AMP and then transferred to the acceptor end of tRNA(Pro). As ProRS can inadvertently accommodate and process non-cognate amino acids such as alanine and cysteine, to avoid such errors it has two additional distinct editing activities against alanine. One activity is designated as 'pretransfer' editing and involves the tRNA(Pro)-independent hydrolysis of activated Ala-AMP. The other activity is designated 'posttransfer' editing and involves deacylation of mischarged Ala-tRNA(Pro). The misacylated Cys-tRNA(Pro) is not edited by ProRS. In Geobacter metallireducens (strain ATCC 53774 / DSM 7210 / GS-15), this protein is Proline--tRNA ligase.